A 160-amino-acid polypeptide reads, in one-letter code: MPAFDIVSEVDNVELKNAVDNATRELATRFDFRGVDASFELKGENIKIKAEDDFQLSQLVDILRGNLAKRGVDARAMDIKDAVHSGKNFYQDIDFKQGVDTLIAKKLVKEIKASKIKVQAAIQGEQLRITGKKRDDLQAVMALVREGDFGQPFQFTNFRD.

This sequence belongs to the YajQ family.

In terms of biological role, nucleotide-binding protein. This chain is Nucleotide-binding protein VF_1240, found in Aliivibrio fischeri (strain ATCC 700601 / ES114) (Vibrio fischeri).